A 401-amino-acid polypeptide reads, in one-letter code: Bone morphogenetic protein 4 (401 aa).

A signal peptide spans 1 to 19 (MIPGNRMLMVILLSQVLLG). The propeptide occupies 20–287 (GTNYASLIPD…GHALTRRSKR (268 aa)). Asparagine 141, asparagine 204, and asparagine 238 each carry an N-linked (GlcNAc...) asparagine glycan. The tract at residues 279–299 (HALTRRSKRSPKQQRPRKKNK) is disordered. Residues 280–299 (ALTRRSKRSPKQQRPRKKNK) are compositionally biased toward basic residues. Intrachain disulfides connect cysteine 301/cysteine 366, cysteine 330/cysteine 398, and cysteine 334/cysteine 400. Residues asparagine 343 and asparagine 358 are each glycosylated (N-linked (GlcNAc...) asparagine).

This sequence belongs to the TGF-beta family. Homodimer; disulfide-linked. Forms heterodimers with the TGF-beta family member derriere. Part of a complex consisting of twsg1 and chrd. Interacts with tsku.

It is found in the secreted. Its subcellular location is the extracellular space. The protein resides in the extracellular matrix. In terms of biological role, posterior-ventralizing factor in Xenopus mesoderm induction. Induces posteroventral mesoderm and counteracts dorsalizing signals such as activin. In Xenopus laevis (African clawed frog), this protein is Bone morphogenetic protein 4 (bmp4).